The following is a 502-amino-acid chain: Probable cytosol aminopeptidase (502 aa).

Mn(2+) is bound by residues lysine 269 and aspartate 274. The active site involves lysine 281. 3 residues coordinate Mn(2+): aspartate 292, aspartate 351, and glutamate 353. Arginine 355 is a catalytic residue.

It belongs to the peptidase M17 family. It depends on Mn(2+) as a cofactor.

It is found in the cytoplasm. It carries out the reaction Release of an N-terminal amino acid, Xaa-|-Yaa-, in which Xaa is preferably Leu, but may be other amino acids including Pro although not Arg or Lys, and Yaa may be Pro. Amino acid amides and methyl esters are also readily hydrolyzed, but rates on arylamides are exceedingly low.. The enzyme catalyses Release of an N-terminal amino acid, preferentially leucine, but not glutamic or aspartic acids.. Presumably involved in the processing and regular turnover of intracellular proteins. Catalyzes the removal of unsubstituted N-terminal amino acids from various peptides. The sequence is that of Probable cytosol aminopeptidase from Vibrio vulnificus (strain CMCP6).